Consider the following 361-residue polypeptide: Homeobox protein knotted-1-like 6 (361 aa).

Positions 11-48 (VGASGVHGGHQHQHHHHPWGSSLSAIVAPPPPPQLQQQ) are disordered. The span at 19–28 (GHQHQHHHHP) shows a compositional bias: basic residues. Residues 242–262 (ELKHHLLKKYSGYLSSLKQEL) enclose the ELK domain. Positions 263–326 (SKKKKKGKLP…NQRKRHWKPS (64 aa)) form a DNA-binding region, homeobox; TALE-type.

It belongs to the TALE/KNOX homeobox family. In terms of assembly, interacts with FTIP7. As to expression, expressed predominantly in shoot apices. Also found to a lesser extent in glumes.

Its subcellular location is the nucleus. The protein resides in the cytoplasm. Its function is as follows. Transcription factor that regulates genes involved in development. May be involved in shoot formation during embryogenesis. Overexpression in transgenic plants causes altered leaf morphology. Regulates anther dehiscence via direct repression of the auxin biosynthetic gene YUCCA4. Binds to the DNA sequence 5'-TGAC-3' in the promoter of the YUCCA4 gene and represses its activity during anther development. Reduction of auxin levels at late stage of anther development, after meiosis of microspore mother cells, is necessary for normal anther dehiscence and seed setting. The polypeptide is Homeobox protein knotted-1-like 6 (OSH1) (Oryza sativa subsp. japonica (Rice)).